Reading from the N-terminus, the 498-residue chain is Glutathione synthetase large chain (498 aa).

Residue Arg128 coordinates substrate. Position 146 (Glu146) interacts with ATP. Residues Glu146 and Asn148 each coordinate Mg(2+). Substrate contacts are provided by residues 150–153 (ISVS), 233–235 (ERN), Gln239, and 291–294 (RVGY). Lys330 contacts ATP. The residue at position 356 (Ser356) is a Phosphoserine. ATP contacts are provided by residues 387-396 (KPQREGGGNN), Tyr398, 420-423 (MRYI), and Glu446. Residue Glu391 coordinates Mg(2+). Residue Arg473 coordinates substrate. 2 residues coordinate ATP: Lys475 and Glu481. 484–485 (VA) contributes to the substrate binding site.

Belongs to the eukaryotic GSH synthase family. In terms of assembly, heterodimer composed of a large and a small chain. Mg(2+) is required as a cofactor.

It carries out the reaction gamma-L-glutamyl-L-cysteine + glycine + ATP = glutathione + ADP + phosphate + H(+). The protein operates within sulfur metabolism; glutathione biosynthesis; glutathione from L-cysteine and L-glutamate: step 2/2. The sequence is that of Glutathione synthetase large chain (gsa1) from Schizosaccharomyces pombe (strain 972 / ATCC 24843) (Fission yeast).